We begin with the raw amino-acid sequence, 452 residues long: GTPase Der (452 aa).

2 EngA-type G domains span residues 4-169 (PIVA…PTTE) and 177-352 (IKVA…ASHR). GTP-binding positions include 10 to 17 (GRPNVGKS), 57 to 61 (DTGGL), 120 to 123 (NKCE), 183 to 190 (GRPNVGKS), 230 to 234 (DTAGI), and 295 to 298 (NKWD). The KH-like domain occupies 353–438 (RRVSTAVINE…PIRLIWRGKS (86 aa)).

This sequence belongs to the TRAFAC class TrmE-Era-EngA-EngB-Septin-like GTPase superfamily. EngA (Der) GTPase family. Associates with the 50S ribosomal subunit.

GTPase that plays an essential role in the late steps of ribosome biogenesis. In Gloeothece citriformis (strain PCC 7424) (Cyanothece sp. (strain PCC 7424)), this protein is GTPase Der.